The following is a 111-amino-acid chain: Cytochrome bo(3) ubiquinol oxidase subunit 4 (111 aa).

At 1–17 (MSSAAHDNHGAGHGSLG) the chain is on the cytoplasmic side. Residues 18-38 (SYAIGFVLSVILTAIPFYMVM) form a helical membrane-spanning segment. The Periplasmic portion of the chain corresponds to 39 to 46 (DGGFSRHA). A helical transmembrane segment spans residues 47–67 (TILTMVVLGLVQVVVHLICFL). At 68–80 (HMNMSSEGRWNVM) the chain is on the cytoplasmic side. A helical transmembrane segment spans residues 81–101 (AFIFTVIVILLVVGLSLWIIF). Residues 102–111 (SADMLMMPMP) are Periplasmic-facing.

The protein belongs to the cytochrome c oxidase bacterial subunit 4 family. As to quaternary structure, heterooctamer of two A chains, two B chains, two C chains and two D chains.

The protein localises to the cell inner membrane. In terms of biological role, cytochrome bo(3) ubiquinol terminal oxidase is the component of the aerobic respiratory chain of E.coli that predominates when cells are grown at high aeration. Has proton pump activity across the membrane in addition to electron transfer, pumping 2 protons/electron. The sequence is that of Cytochrome bo(3) ubiquinol oxidase subunit 4 (cyoD) from Pseudomonas aeruginosa (strain ATCC 15692 / DSM 22644 / CIP 104116 / JCM 14847 / LMG 12228 / 1C / PRS 101 / PAO1).